Reading from the N-terminus, the 348-residue chain is L-asparaginase 2 (348 aa).

An N-terminal signal peptide occupies residues 1–22; sequence MEFFKKTALAALVMGFSGAALA. The Asparaginase/glutaminase domain maps to 24–348; the sequence is PNITILATGG…QQIQQIFNQY (325 aa). Thr-34 (O-isoaspartyl threonine intermediate) is an active-site residue. Substrate-binding positions include 80–81 and 111–112; these read SQ and TD. An intrachain disulfide couples Cys-99 to Cys-127.

Belongs to the asparaginase 1 family. Homotetramer.

It is found in the periplasm. The enzyme catalyses L-asparagine + H2O = L-aspartate + NH4(+). This chain is L-asparaginase 2 (ansB), found in Escherichia coli (strain K12).